A 112-amino-acid chain; its full sequence is FK506-binding protein 1 (112 aa).

A compositionally biased stretch (polar residues) spans 1 to 10 (MSAPATTQVE). Residues 1–20 (MSAPATTQVEILQEGDGKTF) form a disordered region. The PPIase FKBP-type domain maps to 24-112 (GDLVTIHYTG…LFDVELLNVN (89 aa)).

This sequence belongs to the FKBP-type PPIase family. FKBP1 subfamily.

It is found in the cytoplasm. It catalyses the reaction [protein]-peptidylproline (omega=180) = [protein]-peptidylproline (omega=0). Inhibited by both FK506 and rapamycin. Functionally, PPIases accelerate the folding of proteins. It catalyzes the cis-trans isomerization of proline imidic peptide bonds in oligopeptides. The sequence is that of FK506-binding protein 1 (FPR1) from Debaryomyces hansenii (strain ATCC 36239 / CBS 767 / BCRC 21394 / JCM 1990 / NBRC 0083 / IGC 2968) (Yeast).